Here is a 187-residue protein sequence, read N- to C-terminus: T-cell receptor-associated transmembrane adapter 1 (187 aa).

The Extracellular segment spans residues 1 to 7 (MSGSSGC). A helical; Signal-anchor for type III membrane protein membrane pass occupies residues 8–28 (PFFLWGLLAFLGLALVISLIF). Topologically, residues 29–187 (NISHYVEKQR…LIRAKREPVI (159 aa)) are cytoplasmic. Residue Ser46 is modified to Phosphoserine. Tyr80 bears the Phosphotyrosine mark. The interaction with PIK3R1 stretch occupies residues 80–83 (YEQM). Positions 117 to 138 (SVKGKRRRPRKQNTNVSDRGKD) are disordered.

In terms of assembly, homodimer; disulfide-linked. Interacts with CD3Z. When phosphorylated, interacts with PIK3R1. In terms of processing, phosphorylated on tyrosines upon TCR activation. In terms of tissue distribution, present in T-cells (at protein level).

It is found in the cell membrane. Functionally, stabilizes the TCR (T-cell antigen receptor)/CD3 complex at the surface of T-cells. This Mus musculus (Mouse) protein is T-cell receptor-associated transmembrane adapter 1 (Trat1).